The following is a 750-amino-acid chain: Circadian input-output histidine kinase CikA (750 aa).

The segment at 1 to 173 (MLPAFSPIFR…QVIAQIRQSL (173 aa)) is N-terminal domain. The segment at 174–333 (DLSEILNNAV…KNFLGQIGEH (160 aa)) is GAF domain. The Histidine kinase domain maps to 385 to 609 (NISHELRTPL…IFTTVIPQQN (225 aa)). At H388 the chain carries Phosphohistidine; by autocatalysis. The psR domain, bind KaiB(fs) stretch occupies residues 604–750 (VIPQQNFPPT…VQSIQQEPLR (147 aa)). Residues 631-745 (SVIVIEQDEE…LLLQRVQSIQ (115 aa)) form the Response regulatory domain. D680 carries the post-translational modification 4-aspartylphosphate.

In the N-terminal section; belongs to the phytochrome family. In terms of assembly, homodimer. Part of the circadian clock (KaiA, KaiB, KaiC, CikA, RpaA, SasA), the composition of which varies during the circadian cycle. KaiA and CikA compete for binding to KaiB(fs). Interacts with RpaA.

It carries out the reaction ATP + protein L-histidine = ADP + protein N-phospho-L-histidine.. Functions in an input pathway to the Kai circadian clock. Senses oxidized quinones via its C-terminal pseudo-receiver domain, providing a link between cell metabolism and the clock. Affects the ratio of phosphorylated to unphosphorylated KaiC, binds quinones via its pseudo-receptor domain. Quinone-binding destabilizes the protein rapidly. Autophosphorylates, does not transfer the phosphate to its pseudo-receiver (PsR) domain. May play a role in cell division. In terms of biological role, also functions in a two-component CikA/RpaA output pathway from the circadian clock, negatively regulating kaiBC expression independently of labA and of sasA. One of three clock output pathways. Dephosphorylates phospho-RpaA, enhanced by KaiB and KaiC, has only modest kinase activity on RpaA. The protein is Circadian input-output histidine kinase CikA of Synechocystis sp. (strain ATCC 27184 / PCC 6803 / Kazusa).